A 405-amino-acid chain; its full sequence is 3-hydroxy-3-methylglutaryl-coenzyme A reductase (405 aa).

Residues Glu-100 and Asp-310 each act as charge relay system in the active site. His-400 acts as the Proton donor in catalysis.

The protein belongs to the HMG-CoA reductase family.

The enzyme catalyses (R)-mevalonate + 2 NADP(+) + CoA = (3S)-3-hydroxy-3-methylglutaryl-CoA + 2 NADPH + 2 H(+). The protein operates within metabolic intermediate biosynthesis; (R)-mevalonate biosynthesis; (R)-mevalonate from acetyl-CoA: step 3/3. Its function is as follows. Converts HMG-CoA to mevalonate. In Methanocaldococcus jannaschii (strain ATCC 43067 / DSM 2661 / JAL-1 / JCM 10045 / NBRC 100440) (Methanococcus jannaschii), this protein is 3-hydroxy-3-methylglutaryl-coenzyme A reductase (hmgA).